A 327-amino-acid chain; its full sequence is Phenylalanine--tRNA ligase alpha subunit (327 aa).

Residue glutamate 252 participates in Mg(2+) binding.

The protein belongs to the class-II aminoacyl-tRNA synthetase family. Phe-tRNA synthetase alpha subunit type 1 subfamily. Tetramer of two alpha and two beta subunits. The cofactor is Mg(2+).

The protein resides in the cytoplasm. The enzyme catalyses tRNA(Phe) + L-phenylalanine + ATP = L-phenylalanyl-tRNA(Phe) + AMP + diphosphate + H(+). The sequence is that of Phenylalanine--tRNA ligase alpha subunit from Shewanella baltica (strain OS185).